A 204-amino-acid polypeptide reads, in one-letter code: Leucyl/phenylalanyl-tRNA--protein transferase (204 aa).

Belongs to the L/F-transferase family.

The protein resides in the cytoplasm. The enzyme catalyses N-terminal L-lysyl-[protein] + L-leucyl-tRNA(Leu) = N-terminal L-leucyl-L-lysyl-[protein] + tRNA(Leu) + H(+). It catalyses the reaction N-terminal L-arginyl-[protein] + L-leucyl-tRNA(Leu) = N-terminal L-leucyl-L-arginyl-[protein] + tRNA(Leu) + H(+). The catalysed reaction is L-phenylalanyl-tRNA(Phe) + an N-terminal L-alpha-aminoacyl-[protein] = an N-terminal L-phenylalanyl-L-alpha-aminoacyl-[protein] + tRNA(Phe). Functionally, functions in the N-end rule pathway of protein degradation where it conjugates Leu, Phe and, less efficiently, Met from aminoacyl-tRNAs to the N-termini of proteins containing an N-terminal arginine or lysine. The chain is Leucyl/phenylalanyl-tRNA--protein transferase from Sinorhizobium fredii (strain NBRC 101917 / NGR234).